Here is a 647-residue protein sequence, read N- to C-terminus: Beta-galactosidase (647 aa).

An N-terminal signal peptide occupies residues 1 to 24 (MLRVPLCTPLPLLALLQLLGAAHG). The propeptide occupies 25–29 (IYNVT). Residue Asn27 is glycosylated (N-linked (GlcNAc...) asparagine). Positions 84, 130, and 188 each coordinate substrate. The active-site Proton donor is Glu189. A disulfide bridge links Cys196 with Cys231. N-linked (GlcNAc...) asparagine glycosylation is present at Asn248. Glu269 (nucleophile) is an active-site residue. Tyr334 provides a ligand contact to substrate. 6 N-linked (GlcNAc...) asparagine glycosylation sites follow: Asn500, Asn504, Asn510, Asn544, Asn557, and Asn617. Cys628 and Cys636 form a disulfide bridge.

This sequence belongs to the glycosyl hydrolase 35 family. In terms of assembly, homodimer. May form higher multimers.

Its subcellular location is the lysosome. The enzyme catalyses Hydrolysis of terminal non-reducing beta-D-galactose residues in beta-D-galactosides.. Functionally, cleaves beta-linked terminal galactosyl residues from gangliosides, glycoproteins, and glycosaminoglycans. This chain is Beta-galactosidase (Glb1), found in Mus musculus (Mouse).